Consider the following 402-residue polypeptide: 4-hydroxy-3-methylbut-2-en-1-yl diphosphate synthase (ferredoxin) (402 aa).

[4Fe-4S] cluster is bound by residues C311, C314, C345, and E352.

The protein belongs to the IspG family. [4Fe-4S] cluster is required as a cofactor.

It catalyses the reaction (2E)-4-hydroxy-3-methylbut-2-enyl diphosphate + 2 oxidized [2Fe-2S]-[ferredoxin] + H2O = 2-C-methyl-D-erythritol 2,4-cyclic diphosphate + 2 reduced [2Fe-2S]-[ferredoxin] + H(+). Its pathway is isoprenoid biosynthesis; isopentenyl diphosphate biosynthesis via DXP pathway; isopentenyl diphosphate from 1-deoxy-D-xylulose 5-phosphate: step 5/6. Converts 2C-methyl-D-erythritol 2,4-cyclodiphosphate (ME-2,4cPP) into 1-hydroxy-2-methyl-2-(E)-butenyl 4-diphosphate, using ferredoxin I (PetF) as the reducing agent. This chain is 4-hydroxy-3-methylbut-2-en-1-yl diphosphate synthase (ferredoxin), found in Thermosynechococcus vestitus (strain NIES-2133 / IAM M-273 / BP-1).